The following is a 312-amino-acid chain: 4-hydroxy-3-methylbut-2-enyl diphosphate reductase (312 aa).

A [4Fe-4S] cluster-binding site is contributed by C15. (2E)-4-hydroxy-3-methylbut-2-enyl diphosphate-binding residues include H44 and H77. Dimethylallyl diphosphate is bound by residues H44 and H77. Residues H44 and H77 each coordinate isopentenyl diphosphate. Residue C99 participates in [4Fe-4S] cluster binding. H127 is a binding site for (2E)-4-hydroxy-3-methylbut-2-enyl diphosphate. H127 serves as a coordination point for dimethylallyl diphosphate. Isopentenyl diphosphate is bound at residue H127. The active-site Proton donor is E129. Position 167 (T167) interacts with (2E)-4-hydroxy-3-methylbut-2-enyl diphosphate. A [4Fe-4S] cluster-binding site is contributed by C197. Positions 225, 226, 227, and 269 each coordinate (2E)-4-hydroxy-3-methylbut-2-enyl diphosphate. Positions 225, 226, 227, and 269 each coordinate dimethylallyl diphosphate. Isopentenyl diphosphate is bound by residues S225, S226, N227, and S269.

This sequence belongs to the IspH family. It depends on [4Fe-4S] cluster as a cofactor.

It catalyses the reaction isopentenyl diphosphate + 2 oxidized [2Fe-2S]-[ferredoxin] + H2O = (2E)-4-hydroxy-3-methylbut-2-enyl diphosphate + 2 reduced [2Fe-2S]-[ferredoxin] + 2 H(+). The enzyme catalyses dimethylallyl diphosphate + 2 oxidized [2Fe-2S]-[ferredoxin] + H2O = (2E)-4-hydroxy-3-methylbut-2-enyl diphosphate + 2 reduced [2Fe-2S]-[ferredoxin] + 2 H(+). The protein operates within isoprenoid biosynthesis; dimethylallyl diphosphate biosynthesis; dimethylallyl diphosphate from (2E)-4-hydroxy-3-methylbutenyl diphosphate: step 1/1. It participates in isoprenoid biosynthesis; isopentenyl diphosphate biosynthesis via DXP pathway; isopentenyl diphosphate from 1-deoxy-D-xylulose 5-phosphate: step 6/6. In terms of biological role, catalyzes the conversion of 1-hydroxy-2-methyl-2-(E)-butenyl 4-diphosphate (HMBPP) into a mixture of isopentenyl diphosphate (IPP) and dimethylallyl diphosphate (DMAPP). Acts in the terminal step of the DOXP/MEP pathway for isoprenoid precursor biosynthesis. This is 4-hydroxy-3-methylbut-2-enyl diphosphate reductase from Aromatoleum aromaticum (strain DSM 19018 / LMG 30748 / EbN1) (Azoarcus sp. (strain EbN1)).